We begin with the raw amino-acid sequence, 237 residues long: Putative biotin ligase (237 aa).

Positions 1 to 191 constitute a BPL/LPL catalytic domain; it reads MEIIHLSEID…KKYKKYSITI (191 aa).

The protein belongs to the biotin--protein ligase family.

The catalysed reaction is biotin + L-lysyl-[protein] + ATP = N(6)-biotinyl-L-lysyl-[protein] + AMP + diphosphate + H(+). The sequence is that of Putative biotin ligase from Methanocaldococcus jannaschii (strain ATCC 43067 / DSM 2661 / JAL-1 / JCM 10045 / NBRC 100440) (Methanococcus jannaschii).